Reading from the N-terminus, the 311-residue chain is MQEIQKNTKKEQYNLNKLQKRLRRNVGEAIADFNMIEEGDRIMVCLSGGKDSYTMLEILRNLQQSAPINFSLVAVNLDQKQPGFPEHILPAYLEQLGVEYKIVEENTYGIVKEKIPEGKTTCSLCSRLRRGILYRTATELGATKIALGHHRDDILQTLFLNMFYGGKMKGMPPKLMSDDGKHIVIRPLAYCREKDIVRFAEAKAFPIIPCNLCGSQPNLQRQVIADMLRDWDKRYPGRIETMFSAMQNVVPSHLCDTNLFDFKGITHGSEVVDGGDLAFDREEIPLQPAGWQPEEDDTSLEALRLDVIEVK.

Positions 47–52 (SGGKDS) match the PP-loop motif motif. The [4Fe-4S] cluster site is built by cysteine 122, cysteine 125, and cysteine 213.

Belongs to the TtcA family. Homodimer. It depends on Mg(2+) as a cofactor. The cofactor is [4Fe-4S] cluster.

It localises to the cytoplasm. The catalysed reaction is cytidine(32) in tRNA + S-sulfanyl-L-cysteinyl-[cysteine desulfurase] + AH2 + ATP = 2-thiocytidine(32) in tRNA + L-cysteinyl-[cysteine desulfurase] + A + AMP + diphosphate + H(+). It functions in the pathway tRNA modification. In terms of biological role, catalyzes the ATP-dependent 2-thiolation of cytidine in position 32 of tRNA, to form 2-thiocytidine (s(2)C32). The sulfur atoms are provided by the cysteine/cysteine desulfurase (IscS) system. This Salmonella heidelberg (strain SL476) protein is tRNA-cytidine(32) 2-sulfurtransferase.